The following is a 237-amino-acid chain: MSKPIYNRILLKLSGEALQGDEGFGIDPSILDRMALEIKELVEMGVEVGVVLGGGNLFRGAKLAKAGMNRVVGDHMGMLATVMNGLAMRDALHRAEVNAKLMSAFQLNGICDTYNWSEAIKMLREKRVVIFSAGTGSPFFTTDSAGCLRGIEIEADVVLKATKVEGVYDKDPSKFNDAKLYNTLTYAEVIDQELKVMDLAAFTLARDHNMPIRVFNMGKPGALREVVMGTTEGTTIS.

12–15 (KLSG) contributes to the ATP binding site. The interval 20-25 (GDEGFG) is involved in allosteric activation by GTP. Position 54 (glycine 54) interacts with UMP. ATP-binding residues include glycine 55 and arginine 59. Residues aspartate 74 and 135 to 142 (TGSPFFTT) each bind UMP. Residues threonine 162, tyrosine 168, and aspartate 171 each contribute to the ATP site.

Belongs to the UMP kinase family. As to quaternary structure, homohexamer.

The protein localises to the cytoplasm. The catalysed reaction is UMP + ATP = UDP + ADP. It functions in the pathway pyrimidine metabolism; CTP biosynthesis via de novo pathway; UDP from UMP (UMPK route): step 1/1. With respect to regulation, allosterically activated by GTP. Inhibited by UTP. Its function is as follows. Catalyzes the reversible phosphorylation of UMP to UDP. This Haemophilus ducreyi (strain 35000HP / ATCC 700724) protein is Uridylate kinase.